A 251-amino-acid chain; its full sequence is 1-(5-phosphoribosyl)-5-[(5-phosphoribosylamino)methylideneamino] imidazole-4-carboxamide isomerase (251 aa).

Asp8 serves as the catalytic Proton acceptor. Asp131 serves as the catalytic Proton donor.

Belongs to the HisA/HisF family.

The protein resides in the cytoplasm. The catalysed reaction is 1-(5-phospho-beta-D-ribosyl)-5-[(5-phospho-beta-D-ribosylamino)methylideneamino]imidazole-4-carboxamide = 5-[(5-phospho-1-deoxy-D-ribulos-1-ylimino)methylamino]-1-(5-phospho-beta-D-ribosyl)imidazole-4-carboxamide. Its pathway is amino-acid biosynthesis; L-histidine biosynthesis; L-histidine from 5-phospho-alpha-D-ribose 1-diphosphate: step 4/9. The protein is 1-(5-phosphoribosyl)-5-[(5-phosphoribosylamino)methylideneamino] imidazole-4-carboxamide isomerase of Burkholderia lata (strain ATCC 17760 / DSM 23089 / LMG 22485 / NCIMB 9086 / R18194 / 383).